The chain runs to 350 residues: MSTVQTVLGAITPNLLGRTLTHEHVALDFEHFFRPPPADFERELQAKISMSTLGYVRMYPYSSKENVRFYDEEALEAAKKDVLLYKKHGGGSIVENSSYGLKRNLEFIVDLAKSTGVHFIAGTGHYIHAVQDASHASLTVEQMSDLYSKDIITGIQVNGETVKCGFIGEVASVYPVHEFEKHSLQAAGEIQEVLGCGVSLHPHRVTNAPFEIMRLYMEAGGRANKCVMSHLDRTIFDIDELLEFAKLGCYMQYDLFGTECSYYQLNSTINMLSDGQRIDNLMKLIEEGLVDRLLMSHDIHTKHRLTSYGGHGYHHIHMNILPRMFAKGVTIEQVEQMTVTNPANWLAFNP.

Residues histidine 22, histidine 24, glutamate 169, histidine 201, histidine 230, and aspartate 298 each contribute to the a divalent metal cation site.

The protein belongs to the metallo-dependent hydrolases superfamily. Phosphotriesterase family. It depends on a divalent metal cation as a cofactor.

This chain is Phosphotriesterase-related protein, found in Drosophila willistoni (Fruit fly).